We begin with the raw amino-acid sequence, 199 residues long: Large ribosomal subunit protein bL25 (199 aa).

Belongs to the bacterial ribosomal protein bL25 family. CTC subfamily. As to quaternary structure, part of the 50S ribosomal subunit; part of the 5S rRNA/L5/L18/L25 subcomplex. Contacts the 5S rRNA. Binds to the 5S rRNA independently of L5 and L18.

Its function is as follows. This is one of the proteins that binds to the 5S RNA in the ribosome where it forms part of the central protuberance. The protein is Large ribosomal subunit protein bL25 of Herpetosiphon aurantiacus (strain ATCC 23779 / DSM 785 / 114-95).